The primary structure comprises 204 residues: MEEYHLKCIVTGPPFVGKSSLLLQFCEKEFSFEMDTTIGVEFQTRSILIDSSKIKLEIWDTAGQESFRSITTNYYRGAHIALLCYDITKRQSFQYLSGWMDEVRQMSSPNIVIALIGNKCDCKDKRVITTEEGAKNAKENDILFFETSAKDYESVESVFDGVSKKVLSLIKQGTLTVVNKKPQSIQLGAPTQETPKKPKSECCK.

12-19 (GPPFVGKS) is a GTP binding site. Residues 34–42 (MDTTIGVEF) carry the Effector region motif. GTP contacts are provided by residues 60–64 (DTAGQ) and 118–121 (NKCD). 2 S-geranylgeranyl cysteine lipidation sites follow: cysteine 202 and cysteine 203.

Belongs to the small GTPase superfamily. Rab family.

The protein resides in the cell membrane. This chain is Ras-related protein RabQ (rabQ), found in Dictyostelium discoideum (Social amoeba).